We begin with the raw amino-acid sequence, 297 residues long: HTH-type transcriptional regulator ArgP (297 aa).

Residues 4 to 60 (PDYRTLQALDAVIRERGFERAAQKLCITQSAVSQRIKQLENMFGQPLLVRTVPPRPT) form the HTH lysR-type domain. Residues 21 to 40 (FERAAQKLCITQSAVSQRIK) constitute a DNA-binding region (H-T-H motif).

This sequence belongs to the LysR transcriptional regulatory family. As to quaternary structure, homodimer.

Controls the transcription of genes involved in arginine and lysine metabolism. The polypeptide is HTH-type transcriptional regulator ArgP (Escherichia coli O127:H6 (strain E2348/69 / EPEC)).